The chain runs to 777 residues: Nuclear autoantigenic sperm protein (777 aa).

Position 2 is an N-acetylalanine (A2). At K34 the chain carries N6-acetyllysine. The TPR 1 repeat unit spans residues 44–77 (AKKLLGLGQKHLVMGDIPAAVNAFQEAASLLGKK). Positions 117–128 (EEEEGEKTEEES) are histone-binding. Position 124 is a phosphothreonine (T124). S128 carries the phosphoserine modification. 3 stretches are compositionally biased toward basic and acidic residues: residues 152 to 186 (MGEK…REDM), 227 to 259 (VTSK…EKGG), and 267 to 276 (IEEKPKEASK). Residues 152–496 (MGEKEAQKTE…ALENKSLQEN (345 aa)) form a disordered region. The segment at 211–244 (EEGKGAAAPEGLSEAEVTSKKPDQEIPGAEEGKS) is histone-binding. K243 carries the N6-acetyllysine modification. S244 bears the Phosphoserine mark. K285 carries the N6-acetyllysine modification. A compositionally biased stretch (basic and acidic residues) spans 303 to 319 (DEPKEQVAASESERGKA). S312 bears the Phosphoserine mark. The segment covering 342 to 353 (AADASAAEAGSE) has biased composition (low complexity). A phosphoserine mark is found at S399, S411, and S440. Residues 458-501 (EQMKEGEETEGSEEEDKENDKAEETLNDSALENKSLQENEEEEI) form a histone-binding region. Acidic residues predominate over residues 464 to 474 (EETEGSEEEDK). Position 466 is a phosphothreonine (T466). Phosphoserine is present on residues S469, S486, and S492. A compositionally biased stretch (polar residues) spans 484–493 (NDSALENKSL). TPR repeat units follow at residues 531–564 (AQAH…QEQY) and 573–606 (AETH…IEKR). Residues 593 to 648 (VAQFSKSIEVIEKRMAVLNEQMKEAEGSPTEYEKEIEELKELLPEIREKIEDAKES) adopt a coiled-coil conformation. S651 carries the phosphoserine modification. Over residues 667–681 (STSGFTPSGGSSSVS) the composition is skewed to low complexity. The tract at residues 667–777 (STSGFTPSGG…AGATVESTAC (111 aa)) is disordered. A Phosphothreonine modification is found at T672. Phosphoserine occurs at positions 694 and 695. The Nuclear localization signal signature appears at 705-711 (VRKKRKP). A compositionally biased stretch (basic and acidic residues) spans 710-728 (KPEEESPRKDDAKKAKQEP). S715 bears the Phosphoserine mark. K725 participates in a covalent cross-link: Glycyl lysine isopeptide (Lys-Gly) (interchain with G-Cter in SUMO1). A Phosphoserine modification is found at S734.

This sequence belongs to the NASP family. In terms of assembly, binds to linker H1 histones. Interacts with histones H2A, H2B, H3 and H4. Interacts with histone H3.3. Interacts with histones H3 and H4; NASP is a histone chaperone that stabilizes and maintains a soluble pool of histone H3-H4 dimers. Interacts with ASF1A and ASF1B; the interaction is probably indirect and mediated by H3-H4. Also binds to HSP90 in the cytoplasm. This interaction stimulates binding of NASP to H1-6/H1T.

It localises to the cytoplasm. It is found in the nucleus. Component of the histone chaperone network. Binds and stabilizes histone H3-H4 not bound to chromatin to maintain a soluble reservoir and modulate degradation by chaperone-mediated autophagy. Required for DNA replication, normal cell cycle progression and cell proliferation. Forms a cytoplasmic complex with HSP90 and H1 linker histones and stimulates HSP90 ATPase activity. NASP and H1 histone are subsequently released from the complex and translocate to the nucleus where the histone is released for binding to DNA. This is Nuclear autoantigenic sperm protein from Bos taurus (Bovine).